We begin with the raw amino-acid sequence, 260 residues long: Transmembrane protein 106C (260 aa).

G2 carries N-myristoyl glycine lipidation. A helical membrane pass occupies residues 85 to 105; that stretch reads YVLLSVLLCLLASGLVFFFLF. A glycan (N-linked (GlcNAc...) asparagine) is linked at N171. The chain crosses the membrane as a helical span at residues 196 to 216; the sequence is SYVYFYCTLPAILVHNIVIFM.

The protein belongs to the TMEM106 family. In terms of assembly, interacts with TMEM106B.

The protein resides in the endoplasmic reticulum membrane. It is found in the membrane. This is Transmembrane protein 106C (Tmem106c) from Rattus norvegicus (Rat).